The sequence spans 344 residues: N-acetyl-gamma-glutamyl-phosphate reductase (344 aa).

The active site involves Cys-148.

Belongs to the NAGSA dehydrogenase family. Type 1 subfamily.

The protein localises to the cytoplasm. The catalysed reaction is N-acetyl-L-glutamate 5-semialdehyde + phosphate + NADP(+) = N-acetyl-L-glutamyl 5-phosphate + NADPH + H(+). It participates in amino-acid biosynthesis; L-arginine biosynthesis; N(2)-acetyl-L-ornithine from L-glutamate: step 3/4. Functionally, catalyzes the NADPH-dependent reduction of N-acetyl-5-glutamyl phosphate to yield N-acetyl-L-glutamate 5-semialdehyde. This Clostridium kluyveri (strain NBRC 12016) protein is N-acetyl-gamma-glutamyl-phosphate reductase.